Consider the following 368-residue polypeptide: DNA replication and repair protein RecF (368 aa).

30–37 (GDNGAGKT) provides a ligand contact to ATP.

It belongs to the RecF family.

The protein localises to the cytoplasm. Functionally, the RecF protein is involved in DNA metabolism; it is required for DNA replication and normal SOS inducibility. RecF binds preferentially to single-stranded, linear DNA. It also seems to bind ATP. This chain is DNA replication and repair protein RecF, found in Xanthomonas euvesicatoria pv. vesicatoria (strain 85-10) (Xanthomonas campestris pv. vesicatoria).